Here is a 349-residue protein sequence, read N- to C-terminus: Flagellar P-ring protein (349 aa).

The N-terminal stretch at 1-16 is a signal peptide; the sequence is MKYFFIIALLLSSLYS.

The protein belongs to the FlgI family. The basal body constitutes a major portion of the flagellar organelle and consists of four rings (L,P,S, and M) mounted on a central rod.

The protein localises to the periplasm. It localises to the bacterial flagellum basal body. Functionally, assembles around the rod to form the L-ring and probably protects the motor/basal body from shearing forces during rotation. The chain is Flagellar P-ring protein from Aliarcobacter butzleri (strain RM4018) (Arcobacter butzleri).